The chain runs to 253 residues: Imidazole glycerol phosphate synthase subunit HisF (253 aa).

Active-site residues include aspartate 11 and aspartate 130.

It belongs to the HisA/HisF family. Heterodimer of HisH and HisF.

It is found in the cytoplasm. The catalysed reaction is 5-[(5-phospho-1-deoxy-D-ribulos-1-ylimino)methylamino]-1-(5-phospho-beta-D-ribosyl)imidazole-4-carboxamide + L-glutamine = D-erythro-1-(imidazol-4-yl)glycerol 3-phosphate + 5-amino-1-(5-phospho-beta-D-ribosyl)imidazole-4-carboxamide + L-glutamate + H(+). It functions in the pathway amino-acid biosynthesis; L-histidine biosynthesis; L-histidine from 5-phospho-alpha-D-ribose 1-diphosphate: step 5/9. Its function is as follows. IGPS catalyzes the conversion of PRFAR and glutamine to IGP, AICAR and glutamate. The HisF subunit catalyzes the cyclization activity that produces IGP and AICAR from PRFAR using the ammonia provided by the HisH subunit. The protein is Imidazole glycerol phosphate synthase subunit HisF of Dehalococcoides mccartyi (strain CBDB1).